The primary structure comprises 1223 residues: ATP-dependent DNA helicase P143 (1223 aa).

The Nuclear localization signal motif lies at 692–701 (RKCRCVQKIK). 919–926 (GVPLSGKS) provides a ligand contact to ATP. Residues 967–981 (TINELKKCSESFFKK) constitute a DNA-binding region (H-T-H motif).

It is found in the host nucleus. The enzyme catalyses ATP + H2O = ADP + phosphate + H(+). Functionally, essential for the initiation of viral DNA replication, it may contribute to other functions such as controlling the switch to the late phase and leading to the inhibition of host protein synthesis. Required for late and very late gene expression. The chain is ATP-dependent DNA helicase P143 (P143) from Orgyia pseudotsugata multicapsid polyhedrosis virus (OpMNPV).